Reading from the N-terminus, the 1081-residue chain is Isoleucine--tRNA ligase (1081 aa).

The 'HIGH' region signature appears at 53 to 63 (PFATGLPHYGN). The 'KMSKS' region signature appears at 607-611 (KMSKS). Lys-610 provides a ligand contact to ATP.

It belongs to the class-I aminoacyl-tRNA synthetase family.

It carries out the reaction tRNA(Ile) + L-isoleucine + ATP = L-isoleucyl-tRNA(Ile) + AMP + diphosphate. This Tetrahymena thermophila protein is Isoleucine--tRNA ligase (ILSA).